The chain runs to 515 residues: 2-isopropylmalate synthase (515 aa).

The Pyruvate carboxyltransferase domain maps to 4-266; the sequence is IKFFDTTLRD…ETRLNLQEIK (263 aa). Positions 13, 201, 203, and 237 each coordinate Mn(2+). The tract at residues 391–515 is regulatory domain; sequence QLSSIQVQYG…RGENEKVATP (125 aa).

Belongs to the alpha-IPM synthase/homocitrate synthase family. LeuA type 1 subfamily. Homodimer. Requires Mn(2+) as cofactor.

Its subcellular location is the cytoplasm. It carries out the reaction 3-methyl-2-oxobutanoate + acetyl-CoA + H2O = (2S)-2-isopropylmalate + CoA + H(+). It functions in the pathway amino-acid biosynthesis; L-leucine biosynthesis; L-leucine from 3-methyl-2-oxobutanoate: step 1/4. Its function is as follows. Catalyzes the condensation of the acetyl group of acetyl-CoA with 3-methyl-2-oxobutanoate (2-ketoisovalerate) to form 3-carboxy-3-hydroxy-4-methylpentanoate (2-isopropylmalate). This chain is 2-isopropylmalate synthase, found in Geobacillus kaustophilus (strain HTA426).